The following is a 300-amino-acid chain: uncharacterized protein (300 aa).

The next 10 membrane-spanning stretches (helical) occupy residues 4-24 (IIII…WIAM), 31-51 (IPPF…LIIL), 68-88 (FQIF…LYGG), 95-115 (ISSI…HFYL), 120-140 (NFIQ…VLLI), 146-166 (CFFQ…HAVI), 177-197 (VSVI…LSII), 214-234 (ILAV…SYFY), 242-262 (FYAS…EIYI), and 272-292 (LWFI…INFF). 2 consecutive EamA domains span residues 15 to 139 (ITWG…FVLL) and 161 to 287 (LSHA…LTLI).

Belongs to the EamA transporter family.

The protein resides in the cell membrane. This is an uncharacterized protein from Buchnera aphidicola subsp. Schizaphis graminum (strain Sg).